Reading from the N-terminus, the 475-residue chain is Dihydrolipoyl dehydrogenase (475 aa).

FAD is bound by residues 39-47 (EKDAYGGTC), Lys56, and Ala118. A disulfide bond links Cys47 and Cys52. Residues 186 to 190 (GGGYI), Glu209, and 275 to 278 (AVGR) contribute to the NAD(+) site. FAD-binding residues include Asp318 and Ala327. His451 serves as the catalytic Proton acceptor.

It belongs to the class-I pyridine nucleotide-disulfide oxidoreductase family. Homodimer. It depends on FAD as a cofactor.

The protein localises to the cytoplasm. It carries out the reaction N(6)-[(R)-dihydrolipoyl]-L-lysyl-[protein] + NAD(+) = N(6)-[(R)-lipoyl]-L-lysyl-[protein] + NADH + H(+). This is Dihydrolipoyl dehydrogenase (lpdA) from Haloferax volcanii (strain ATCC 29605 / DSM 3757 / JCM 8879 / NBRC 14742 / NCIMB 2012 / VKM B-1768 / DS2) (Halobacterium volcanii).